A 460-amino-acid chain; its full sequence is tRNA modification GTPase MnmE (460 aa).

Residues Arg-29, Glu-91, and Lys-132 each coordinate (6S)-5-formyl-5,6,7,8-tetrahydrofolate. A TrmE-type G domain is found at 227 to 383 (GISIALIGKT…LIDTIIKKCG (157 aa)). Asn-237 serves as a coordination point for K(+). Residues 237–242 (NVGKSS), 256–262 (TNIPGTT), and 281–284 (DTAG) contribute to the GTP site. A Mg(2+)-binding site is contributed by Ser-241. K(+) contacts are provided by Thr-256, Ile-258, and Thr-261. Thr-262 lines the Mg(2+) pocket. Lys-460 provides a ligand contact to (6S)-5-formyl-5,6,7,8-tetrahydrofolate.

It belongs to the TRAFAC class TrmE-Era-EngA-EngB-Septin-like GTPase superfamily. TrmE GTPase family. In terms of assembly, homodimer. Heterotetramer of two MnmE and two MnmG subunits. Requires K(+) as cofactor.

Its subcellular location is the cytoplasm. Its function is as follows. Exhibits a very high intrinsic GTPase hydrolysis rate. Involved in the addition of a carboxymethylaminomethyl (cmnm) group at the wobble position (U34) of certain tRNAs, forming tRNA-cmnm(5)s(2)U34. The chain is tRNA modification GTPase MnmE from Prochlorococcus marinus (strain MIT 9215).